The primary structure comprises 341 residues: N-acetyl-gamma-glutamyl-phosphate reductase (341 aa).

Cys-147 is a catalytic residue.

This sequence belongs to the NAGSA dehydrogenase family. Type 1 subfamily.

It localises to the cytoplasm. The catalysed reaction is N-acetyl-L-glutamate 5-semialdehyde + phosphate + NADP(+) = N-acetyl-L-glutamyl 5-phosphate + NADPH + H(+). It participates in amino-acid biosynthesis; L-arginine biosynthesis; N(2)-acetyl-L-ornithine from L-glutamate: step 3/4. Catalyzes the NADPH-dependent reduction of N-acetyl-5-glutamyl phosphate to yield N-acetyl-L-glutamate 5-semialdehyde. This Dehalococcoides mccartyi (strain ATCC BAA-2100 / JCM 16839 / KCTC 5957 / BAV1) protein is N-acetyl-gamma-glutamyl-phosphate reductase.